A 588-amino-acid chain; its full sequence is Adenine deaminase (588 aa).

The protein belongs to the metallo-dependent hydrolases superfamily. Adenine deaminase family. Homodimer. Mn(2+) is required as a cofactor.

The enzyme catalyses adenine + H2O + H(+) = hypoxanthine + NH4(+). The sequence is that of Adenine deaminase from Escherichia coli O7:K1 (strain IAI39 / ExPEC).